A 1223-amino-acid chain; its full sequence is A disintegrin and metalloproteinase with thrombospondin motifs 14 (1223 aa).

Residues 1 to 22 (MAPLRALLSYLLPLHCALCAAA) form the signal peptide. The propeptide occupies 23 to 252 (GSRTPELHLS…QLGDTERKRR (230 aa)). An N-linked (GlcNAc...) asparagine glycan is attached at Asn-109. The 202-residue stretch at 259–460 (YSIEVLLVVD…PSYDCLLDDP (202 aa)) folds into the Peptidase M12B domain. 3 disulfides stabilise this stretch: Cys-336/Cys-382, Cys-376/Cys-455, and Cys-415/Cys-441. His-398 is a binding site for Zn(2+). Residue Glu-399 is part of the active site. Zn(2+) contacts are provided by His-402 and His-408. The region spanning 461-551 (FDPAWPQPPE…WKSPEQTYGQ (91 aa)) is the Disintegrin domain. The N-linked (GlcNAc...) asparagine glycan is linked to Asn-475. Cystine bridges form between Cys-482-Cys-507, Cys-493-Cys-516, Cys-502-Cys-535, Cys-529-Cys-540, Cys-564-Cys-601, Cys-568-Cys-606, and Cys-579-Cys-591. Residues 552–607 (DGGWSSWTKFGSCSRSCGGGVRSRSRSCNNPSPAYGGRLCLGPMFEYQVCNSEECP) enclose the TSP type-1 1 domain. Residues 730 to 846 (LKLVQIPAGA…GSNNVLLEEM (117 aa)) form a spacer region. 3 TSP type-1 domains span residues 847 to 907 (DTYE…HPCS), 908 to 967 (QPVW…LRVP), and 968 to 1022 (CPAQ…PACG). A glycan (N-linked (GlcNAc...) asparagine) is linked at Asn-941. 3 disulfide bridges follow: Cys-980/Cys-1016, Cys-984/Cys-1021, and Cys-995/Cys-1005. The N-linked (GlcNAc...) asparagine glycan is linked to Asn-1027. The region spanning 1059 to 1097 (STEPCTGDRSVFCQMEVLDRYCSIPGYHRLCCVSCIKKA) is the PLAC domain. Positions 1100–1223 (PNPGPDPGPT…TSLPAASPVT (124 aa)) are disordered. Positions 1101–1125 (NPGPDPGPTSLPPFSTPGSPLPGPQ) are enriched in pro residues. Residues 1199-1211 (PEDKGQPGEDLRH) show a composition bias toward basic and acidic residues.

The precursor is cleaved by a furin endopeptidase. In terms of processing, glycosylated. Can be O-fucosylated by POFUT2 on a serine or a threonine residue found within the consensus sequence C1-X(2)-(S/T)-C2-G of the TSP type-1 repeat domains where C1 and C2 are the first and second cysteine residue of the repeat, respectively. Fucosylated repeats can then be further glycosylated by the addition of a beta-1,3-glucose residue by the glucosyltransferase, B3GALTL. Fucosylation mediates the efficient secretion of ADAMTS family members. Can also be C-glycosylated with one or two mannose molecules on tryptophan residues within the consensus sequence W-X-X-W of the TPRs, and N-glycosylated. These other glycosylations can also facilitate secretion. Expressed in retina and at low levels in brain, lung and placenta. High expression in fetal tissues.

Its subcellular location is the secreted. It is found in the extracellular space. The protein resides in the extracellular matrix. Functionally, has aminoprocollagen type I processing activity in the absence of ADAMTS2. Seems to be synthesized as a latent enzyme that requires activation to display aminoprocollagen peptidase activity. Cleaves lysyl oxidase LOX at a site downstream of its propeptide cleavage site to produce a short LOX form. This is A disintegrin and metalloproteinase with thrombospondin motifs 14 (ADAMTS14) from Homo sapiens (Human).